Here is a 78-residue protein sequence, read N- to C-terminus: Apolipoprotein C-I (78 aa).

A signal peptide spans Met1 to Gly26.

The protein belongs to the apolipoprotein C1 family.

It localises to the secreted. Functionally, inhibitor of lipoprotein binding to the low density lipoprotein (LDL) receptor, LDL receptor-related protein, and very low density lipoprotein (VLDL) receptor. Associates with high density lipoproteins (HDL) and the triacylglycerol-rich lipoproteins in the plasma and makes up about 10% of the protein of the VLDL and 2% of that of HDL. Appears to interfere directly with fatty acid uptake and is also the major plasma inhibitor of cholesteryl ester transfer protein (CETP). Binds free fatty acids and reduces their intracellular esterification. Modulates the interaction of APOE with beta-migrating VLDL and inhibits binding of beta-VLDL to the LDL receptor-related protein. The polypeptide is Apolipoprotein C-I (APOC1) (Puma concolor (Mountain lion)).